The chain runs to 330 residues: uncharacterized protein (330 aa).

This sequence to H.influenzae HI_0461.

This is an uncharacterized protein from Escherichia coli (strain K12).